The chain runs to 204 residues: Protease (204 aa).

Catalysis depends on residues histidine 54, aspartate 71, and cysteine 122.

This sequence belongs to the peptidase C5 family. As to quaternary structure, interacts with protease cofactor pVI-C; this interaction is necessary for protease activation.

It is found in the virion. It localises to the host nucleus. The enzyme catalyses Cleaves proteins of the adenovirus and its host cell at two consensus sites: -Yaa-Xaa-Gly-Gly-|-Xaa- and -Yaa-Xaa-Gly-Xaa-|-Gly- (in which Yaa is Met, Ile or Leu, and Xaa is any amino acid).. Requires DNA and protease cofactor for maximal activation. Inside nascent virions, becomes partially activated by binding to the viral DNA, allowing it to cleave the cofactor that binds to the protease and fully activates it. Actin, like the viral protease cofactor, seems to act as a cofactor in the cleavage of cytokeratin 18 and of actin itself. Its function is as follows. Cleaves viral precursor proteins (pTP, pIIIa, pVI, pVII, pVIII, and pX) inside newly assembled particles giving rise to mature virions. Protease complexed to its cofactor slides along the viral DNA to specifically locate and cleave the viral precursors. Mature virions have a weakened organization compared to the unmature virions, thereby facilitating subsequent uncoating. Without maturation, the particle lacks infectivity and is unable to uncoat. Late in adenovirus infection, in the cytoplasm, may participate in the cytoskeleton destruction. Cleaves host cell cytoskeletal keratins K7 and K18. The sequence is that of Protease from Bos taurus (Bovine).